The sequence spans 337 residues: S-adenosylmethionine:tRNA ribosyltransferase-isomerase (337 aa).

The protein belongs to the QueA family. In terms of assembly, monomer.

The protein localises to the cytoplasm. The enzyme catalyses 7-aminomethyl-7-carbaguanosine(34) in tRNA + S-adenosyl-L-methionine = epoxyqueuosine(34) in tRNA + adenine + L-methionine + 2 H(+). Its pathway is tRNA modification; tRNA-queuosine biosynthesis. In terms of biological role, transfers and isomerizes the ribose moiety from AdoMet to the 7-aminomethyl group of 7-deazaguanine (preQ1-tRNA) to give epoxyqueuosine (oQ-tRNA). This chain is S-adenosylmethionine:tRNA ribosyltransferase-isomerase, found in Legionella pneumophila (strain Lens).